A 444-amino-acid chain; its full sequence is Exodeoxyribonuclease 7 large subunit (444 aa).

It belongs to the XseA family. Heterooligomer composed of large and small subunits.

It is found in the cytoplasm. The catalysed reaction is Exonucleolytic cleavage in either 5'- to 3'- or 3'- to 5'-direction to yield nucleoside 5'-phosphates.. Bidirectionally degrades single-stranded DNA into large acid-insoluble oligonucleotides, which are then degraded further into small acid-soluble oligonucleotides. This is Exodeoxyribonuclease 7 large subunit from Rickettsia conorii (strain ATCC VR-613 / Malish 7).